The chain runs to 333 residues: GDP-fucose transporter 1 (333 aa).

The next 8 membrane-spanning stretches (helical) occupy residues 13–33, 45–65, 95–115, 139–159, 169–189, 211–231, 239–259, and 293–313; these read SIKI…MVFL, APMF…FILG, LVFV…GVAF, TSMP…VGVN, MAGI…AIYI, AIFL…IAAS, YWFL…VSML, and TATW…YVLV.

Belongs to the TPT transporter family. SLC35C subfamily.

It localises to the golgi apparatus membrane. The enzyme catalyses GMP(out) + GDP-beta-L-fucose(in) = GMP(in) + GDP-beta-L-fucose(out). Its function is as follows. Antiporter specific for GDP-l-fucose and depending on the concomitant reverse transport of GMP. Involved in GDP-fucose import from the cytoplasm into the Golgi lumen. This chain is GDP-fucose transporter 1 (slc35c1), found in Monosiga brevicollis (Choanoflagellate).